The primary structure comprises 547 residues: MAIKDVKFGNDARVKMLKGVNILADAVKVTLGPKGRNVVLDKAYGAPTITKDGVSVAREIELEDKFENMGAQMVKEVASKANDVAGDGTTTATVLAQSIVSEGLRAVAAGMNPMDLKRGIDKAVAAVVEELKAISKPCETSKEIEQVGTISANSDETVGKLIAQAMEKVGKEGVITVEDGTGLDDALDVVEGMQFDRGYLSPYFINKPEAGTVELDNPYIILVDKKISNIREILPVLEAVAKAGKPLLIIAEDVEGEALATLVVNTMRGIVKVAAVKAPGFGDRRKAMLQDIAILTAGTVISEEIGMELEKATLEELGQAKRVVITKDNTTIIDGIGDEAQIKARVVQIRQQIEDSTSDYDKEKLQERVAKLAGGVAVIKVGAATEVAMKEKKDRVDDALHATRAAVEEGIVPGGGVALVRAANKVSATLTGDNEEQNVGIKLALRAMEAPLRQIVENSGEDASVVARDVKDGSGNFGYNATTEEYGDMLEMGILDPTKVTRSALQFAASIAGLMITTECMITDLPKEDKLDAQAAMGGMGGMGGMM.

ATP is bound by residues 30-33, Lys-51, 87-91, Gly-415, and Asp-496; these read TLGP and DGTTT.

It belongs to the chaperonin (HSP60) family. As to quaternary structure, forms a cylinder of 14 subunits composed of two heptameric rings stacked back-to-back. Interacts with the co-chaperonin GroES.

It localises to the cytoplasm. The catalysed reaction is ATP + H2O + a folded polypeptide = ADP + phosphate + an unfolded polypeptide.. Functionally, together with its co-chaperonin GroES, plays an essential role in assisting protein folding. The GroEL-GroES system forms a nano-cage that allows encapsulation of the non-native substrate proteins and provides a physical environment optimized to promote and accelerate protein folding. The polypeptide is Chaperonin GroEL (Haemophilus ducreyi (strain 35000HP / ATCC 700724)).